The chain runs to 72 residues: Protein LITTLE ZIPPER 4 (72 aa).

Positions 14–44 (YIIKENERLRKKAQILNQENQQLLFELKQKL) form a coiled coil. The segment at 42–72 (QKLSKTKNSSGSNQGNNNNNNNLSSSSSASG) is disordered. A compositionally biased stretch (low complexity) spans 49–72 (NSSGSNQGNNNNNNNLSSSSSASG).

Interacts with REV.

Its function is as follows. Competitive inhibitor of the HD-ZIPIII transcription factors in shoot apical meristem (SAM) development. Acts by forming non-functional heterodimers. Part of a negative feedback loop. Essential for proper functioning of stem cells in the SAM. The protein is Protein LITTLE ZIPPER 4 of Arabidopsis thaliana (Mouse-ear cress).